A 595-amino-acid polypeptide reads, in one-letter code: MNATARQEPADLNDPALRARAVTAARGDAPFDMLITGGRLLDTVTGLIRQADIGLVGALISSVHAPASRTDAVEIIDAAGSILTPGLIDTHMHIESSMVTPAEYASAVLPRGVTTIVWDPHEFGNVHGLDGVRWAIEAARSLPLRMILLAPSCVPSAPGLELAGADFDASMITEMLHSSAVGGVAEVMNMRGVIDGDPRMTDIVNAGLAAGKLVCGHARGLEGADLNAFMASGITSDHELTSGADLLAKLSAGLTIELRGSHDHLLQEFVEVLSGLGHLPPTVTLCTDDVFPDELQEGGGLDDVVRRLVRYGMKPEWAIRAATFNAAQRLKRSDLGLVATGRRADIVLFEDLTEFRARLVISGGRIVARNGSMQVAVQQIDTAPLVNSVKLPPLTENDFRIPAKGERVRVATIDRPRFTQWGEAETEVRDGFIVPPAGSAMISVAHRHGKTDGIPRIGFLTGWGEWRGAFCTTVSHDSHNLTVFGGNAGDMALAANAVISAGGGMAVAKDGRIEAMLPLPLSGLVTDASLKDTALAFAGIRKAMEKIVTWKPPYLVFKACFGATLACNVGPHQTDQGIADVVTGKVLENPVLAVW.

This sequence belongs to the metallo-dependent hydrolases superfamily. Adenine deaminase family. Requires Mn(2+) as cofactor.

The catalysed reaction is adenine + H2O + H(+) = hypoxanthine + NH4(+). This Rhizobium johnstonii (strain DSM 114642 / LMG 32736 / 3841) (Rhizobium leguminosarum bv. viciae) protein is Adenine deaminase 2.